Here is a 767-residue protein sequence, read N- to C-terminus: ATP-dependent rRNA helicase SPB4 (767 aa).

Residues 28 to 56 carry the Q motif motif; it reads WTKLTPPLTPWVVSLLSDLGFGQMTPVQA. The Helicase ATP-binding domain maps to 59-291; it reads IPLFVSHKDV…RIGLRNPVRV (233 aa). 72–79 provides a ligand contact to ATP; sequence AVTGSGKT. The disordered stretch occupies residues 132–176; that stretch reads HVQAQQQQDQDEQDEQDEQEAQSDSDTDPDASTALNNKRKSSNHL. Residues 140–160 are compositionally biased toward acidic residues; sequence DQDEQDEQDEQEAQSDSDTDP. Residues 239–242 carry the DEAD box motif; it reads DEAD. The Helicase C-terminal domain maps to 330-507; sequence QLARIVLFES…ILEPAEDDAS (178 aa). The disordered stretch occupies residues 609 to 767; it reads KLSGDQAKPP…NADAEPFFVI (159 aa). Composition is skewed to basic and acidic residues over residues 636-645 and 659-681; these read CDSHDSDDAH and LERE…ANRE. Positions 654 to 746 form a coiled coil; the sequence is KNKRKLEREK…RANSDNDDAM (93 aa). Polar residues predominate over residues 690–700; it reads LKTQAAESSSN. A compositionally biased stretch (basic and acidic residues) spans 701 to 746; the sequence is AKHEPPQDDHDEHDWNDDYRKLQKDKRQQRQRNKADRANSDNDDAM. Residues 749–761 show a composition bias toward low complexity; the sequence is NSDSDAAAANADA.

This sequence belongs to the DEAD box helicase family. DDX55/SPB4 subfamily. Component of pre-60S ribosomal complexes.

It is found in the nucleus. Its subcellular location is the nucleolus. The catalysed reaction is ATP + H2O = ADP + phosphate + H(+). Functionally, ATP-binding RNA helicase involved in the biogenesis of 60S ribosomal subunits. Binds 90S pre-ribosomal particles and dissociates from pre-60S ribosomal particles after processing of 27SB pre-rRNA. Required for the normal formation of 18S rRNA through the processing of pre-rRNAs at sites A0, A1 and A2, and the normal formation of 25S and 5.8S rRNAs through the processing of pre-rRNAs at sites C1 and C2. In Mycosarcoma maydis (Corn smut fungus), this protein is ATP-dependent rRNA helicase SPB4.